The chain runs to 338 residues: Flap endonuclease 1 (338 aa).

Residues 1–98 form an N-domain region; sequence MGVNLSSILI…ETLRERSLIK (98 aa). Mg(2+) is bound by residues Asp-27, Asp-80, Glu-152, Glu-154, Asp-173, Asp-175, and Asp-236. Residues 116–257 form an I-domain region; sequence KIRSLSSRIN…TALSLIKKYN (142 aa). Residues 330 to 338 are interaction with PCNA; sequence HQSSLDRFF.

This sequence belongs to the XPG/RAD2 endonuclease family. FEN1 subfamily. As to quaternary structure, interacts with PCNA. PCNA stimulates the nuclease activity without altering cleavage specificity. It depends on Mg(2+) as a cofactor.

Functionally, structure-specific nuclease with 5'-flap endonuclease and 5'-3' exonuclease activities involved in DNA replication and repair. During DNA replication, cleaves the 5'-overhanging flap structure that is generated by displacement synthesis when DNA polymerase encounters the 5'-end of a downstream Okazaki fragment. Binds the unpaired 3'-DNA end and kinks the DNA to facilitate 5' cleavage specificity. Cleaves one nucleotide into the double-stranded DNA from the junction in flap DNA, leaving a nick for ligation. Also involved in the base excision repair (BER) pathway. Acts as a genome stabilization factor that prevents flaps from equilibrating into structures that lead to duplications and deletions. Also possesses 5'-3' exonuclease activity on nicked or gapped double-stranded DNA. The polypeptide is Flap endonuclease 1 (Picrophilus torridus (strain ATCC 700027 / DSM 9790 / JCM 10055 / NBRC 100828 / KAW 2/3)).